Reading from the N-terminus, the 110-residue chain is Putative membrane protein insertion efficiency factor (110 aa).

It belongs to the UPF0161 family.

It is found in the cell inner membrane. Could be involved in insertion of integral membrane proteins into the membrane. This chain is Putative membrane protein insertion efficiency factor, found in Campylobacter hominis (strain ATCC BAA-381 / DSM 21671 / CCUG 45161 / LMG 19568 / NCTC 13146 / CH001A).